Here is a 132-residue protein sequence, read N- to C-terminus: Fibroblast growth factor 1 (132 aa).

Heparin contacts are provided by residues Asn-10 and 108–120; that span reads KTKP…FGQK.

It belongs to the heparin-binding growth factors family.

Its subcellular location is the secreted. The protein localises to the cytoplasm. It is found in the cell cortex. The protein resides in the cytosol. It localises to the nucleus. Its function is as follows. Plays an important role in the regulation of cell survival, cell division, angiogenesis, cell differentiation and cell migration. Functions as a potent mitogen in vitro. Acts as a ligand for FGFR1 and integrins. Binds to FGFR1 in the presence of heparin leading to FGFR1 dimerization and activation via sequential autophosphorylation on tyrosine residues which act as docking sites for interacting proteins, leading to the activation of several signaling cascades. Binds to integrins. Its binding to integrins and subsequent ternary complex formation with integrins and FGFR1 are essential for FGF1 signaling. The chain is Fibroblast growth factor 1 (fgf1) from Notophthalmus viridescens (Eastern newt).